The following is a 607-amino-acid chain: MKKEEKIFKAETKELLNLMIHSIYTNKEIFLRELISNANDAIDKLKFQSLTDTDILKDNDKFRIDISVDKDNRTLTISDNGIGMTYEEVDDNIGTIAKSGSKLFKEQLEEAKKGDIDIIGQFGVGFYSGFIVADKITLETKSPYSENGVKWISSGDGNYEIEEIAKQDRGTKITLHLKDGDEYNEFLEDWKIKDLVKKYSNYIRYEIYFGDEVINSTKPIWKKDKKELKDDDYNEFYKATFHDWNDPLLHINLKVQGNIEYNALLFIPKKLPFDYYTKNFKRGLQLYTKNVFIMEKCEDLIPEYFNFISGLVDCDSLSLNISREILQQNAELQVISKNLEKKITSELEKILKNDREKYVEFWKEFGRSIKAGVQDMFGMNKEKLQDLLIFVSSHDDKYTTLKEYVDRMGDNKEILYVPAESVDAAKYLPKMEKLKEQGREVLILTDKIDEFTLMAMRDYSGKEFKSINSSDFKFSDDKEKEEEVKKIADENKELIEKAKEFLKDKVSEVELSNNIGNSASSLLAKGGLSLEMEKTLSEMTNNNDMPKAEKVLAINPEHVLFNRLKSSVNTEDFNKLVDVLYNQALLLEGFNIENPAEFIKNLNSLIK.

Positions 1-323 (MKKEEKIFKA…CDSLSLNISR (323 aa)) are a; substrate-binding. Residues 324–534 (EILQQNAELQ…KGGLSLEMEK (211 aa)) form a b region. Positions 535 to 607 (TLSEMTNNND…FIKNLNSLIK (73 aa)) are c.

This sequence belongs to the heat shock protein 90 family. Homodimer.

Its subcellular location is the cytoplasm. Functionally, molecular chaperone. Has ATPase activity. The polypeptide is Chaperone protein HtpG (Fusobacterium nucleatum subsp. nucleatum (strain ATCC 25586 / DSM 15643 / BCRC 10681 / CIP 101130 / JCM 8532 / KCTC 2640 / LMG 13131 / VPI 4355)).